A 378-amino-acid chain; its full sequence is Dual-specificity RNA methyltransferase RlmN (378 aa).

The Proton acceptor role is filled by E96. The Radical SAM core domain maps to Q102–D342. A disulfide bridge links C109 with C345. [4Fe-4S] cluster is bound by residues C116, C120, and C123. Residues G170 to E171, S202, S224 to H226, and N302 contribute to the S-adenosyl-L-methionine site. Catalysis depends on C345, which acts as the S-methylcysteine intermediate.

It belongs to the radical SAM superfamily. RlmN family. [4Fe-4S] cluster serves as cofactor.

The protein localises to the cytoplasm. It carries out the reaction adenosine(2503) in 23S rRNA + 2 reduced [2Fe-2S]-[ferredoxin] + 2 S-adenosyl-L-methionine = 2-methyladenosine(2503) in 23S rRNA + 5'-deoxyadenosine + L-methionine + 2 oxidized [2Fe-2S]-[ferredoxin] + S-adenosyl-L-homocysteine. It catalyses the reaction adenosine(37) in tRNA + 2 reduced [2Fe-2S]-[ferredoxin] + 2 S-adenosyl-L-methionine = 2-methyladenosine(37) in tRNA + 5'-deoxyadenosine + L-methionine + 2 oxidized [2Fe-2S]-[ferredoxin] + S-adenosyl-L-homocysteine. Specifically methylates position 2 of adenine 2503 in 23S rRNA and position 2 of adenine 37 in tRNAs. m2A2503 modification seems to play a crucial role in the proofreading step occurring at the peptidyl transferase center and thus would serve to optimize ribosomal fidelity. The chain is Dual-specificity RNA methyltransferase RlmN from Pseudomonas paraeruginosa (strain DSM 24068 / PA7) (Pseudomonas aeruginosa (strain PA7)).